The chain runs to 365 residues: tRNA(Met) cytidine acetate ligase (365 aa).

ATP-binding positions include 7–20 (IAEF…HKYL), glycine 96, asparagine 152, and arginine 175.

Belongs to the TmcAL family.

Its subcellular location is the cytoplasm. The catalysed reaction is cytidine(34) in elongator tRNA(Met) + acetate + ATP = N(4)-acetylcytidine(34) in elongator tRNA(Met) + AMP + diphosphate. In terms of biological role, catalyzes the formation of N(4)-acetylcytidine (ac(4)C) at the wobble position of elongator tRNA(Met), using acetate and ATP as substrates. First activates an acetate ion to form acetyladenylate (Ac-AMP) and then transfers the acetyl group to tRNA to form ac(4)C34. This Streptococcus pneumoniae (strain Hungary19A-6) protein is tRNA(Met) cytidine acetate ligase.